A 177-amino-acid polypeptide reads, in one-letter code: Large ribosomal subunit protein uL6 (177 aa).

This sequence belongs to the universal ribosomal protein uL6 family. In terms of assembly, part of the 50S ribosomal subunit.

This protein binds to the 23S rRNA, and is important in its secondary structure. It is located near the subunit interface in the base of the L7/L12 stalk, and near the tRNA binding site of the peptidyltransferase center. This is Large ribosomal subunit protein uL6 from Psychrobacter arcticus (strain DSM 17307 / VKM B-2377 / 273-4).